The following is a 396-amino-acid chain: Ornithine aminotransferase (396 aa).

Lysine 255 bears the N6-(pyridoxal phosphate)lysine mark.

This sequence belongs to the class-III pyridoxal-phosphate-dependent aminotransferase family. OAT subfamily. Pyridoxal 5'-phosphate is required as a cofactor.

The protein localises to the cytoplasm. The enzyme catalyses a 2-oxocarboxylate + L-ornithine = L-glutamate 5-semialdehyde + an L-alpha-amino acid. It participates in amino-acid biosynthesis; L-proline biosynthesis; L-glutamate 5-semialdehyde from L-ornithine: step 1/1. Functionally, catalyzes the interconversion of ornithine to glutamate semialdehyde. The polypeptide is Ornithine aminotransferase (Bacillus cereus (strain 03BB102)).